The primary structure comprises 648 residues: Forkhead box protein N1 (648 aa).

Positions 1-105 (MVSLPPPQSD…SDKYPGFGFE (105 aa)) are disordered. The span at 58–67 (ERTPSLPPHS) shows a compositional bias: pro residues. A DNA-binding region (fork-head) is located at residues 271-367 (KPIYSYSILI…EELQKWKRKD (97 aa)). 3 disordered regions span residues 392-445 (LGSP…LLMG), 458-508 (LSPG…LLAE), and 623-648 (LEPT…VALA). Residues 462–473 (LAPPGPPQPLFP) show a composition bias toward pro residues.

As to expression, expressed in thymus.

It localises to the nucleus. Its function is as follows. Transcriptional regulator which regulates the development, differentiation, and function of thymic epithelial cells (TECs) both in the prenatal and postnatal thymus. Acts as a master regulator of the TECs lineage development and is required from the onset of differentiation in progenitor TECs in the developing fetus to the final differentiation steps through which TECs mature to acquire their full functionality. Regulates, either directly or indirectly the expression of a variety of genes that mediate diverse aspects of thymus development and function, including MHC Class II, DLL4, CCL25, CTSL, CD40 and PAX1. Regulates the differentiation of the immature TECs into functional cortical TECs (cTECs) and medullary TECs (mTECs). Essential for maintenance of mTECs population in the postnatal thymus. Involved in the morphogenesis and maintenance of the three-dimensional thymic microstructure which is necessary for a fully functional thymus. Plays an important role in the maintenance of hematopoiesis and particularly T lineage progenitors within the bone marrow niche with age. Essential for the vascularization of the thymus anlage. Promotes the terminal differentiation of epithelial cells in the epidermis and hair follicles, partly by negatively regulating the activity of protein kinase C. Plays a crucial role in the early prenatal stages of T-cell ontogeny. The polypeptide is Forkhead box protein N1 (FOXN1) (Homo sapiens (Human)).